Here is a 44-residue protein sequence, read N- to C-terminus: Alpha-amylase inhibitor helianthamide (44 aa).

Disulfide bonds link C6-C38, C16-C33, and C20-C39. Residues 7-10 are inhibitory motif; that stretch reads YIYH.

This sequence belongs to the sea anemone alpha-amylase inhibitor family.

The protein resides in the secreted. Specific pancreatic alpha-amylase (AMY2A) inhibitor. The recombinant peptide inhibits human pancreatic (Ki=0.01 nM) and porcine pancreatic alpha-amylases (Ki=0.1 nM). The protein is Alpha-amylase inhibitor helianthamide of Stichodactyla helianthus (Sun anemone).